The sequence spans 1061 residues: E3 ubiquitin-protein ligase Smurf1 (1061 aa).

The 116-residue stretch at 1–116 folds into the C2 domain; the sequence is MNKLDYPRRN…KGAGFQRLDL (116 aa). 2 disordered regions span residues 143-176 and 188-496; these read SGNP…WEER and HATK…SGQR. A WW 1 domain is found at 167-200; the sequence is DSLPEGWEERRTDNGRVYYVNHATKSTQWDRPRQ. Polar residues-rich tracts occupy residues 207–225 and 233–255; these read SHAT…NSGD and TRST…SVTA. The residue at position 262 (S262) is a Phosphoserine. Residues 264–273 show a composition bias toward polar residues; sequence EILSSVGKEN. Composition is skewed to low complexity over residues 274-300 and 311-322; these read TSPT…SAGG and PATPTSSTTSAS. Residues 348 to 359 show a composition bias toward polar residues; the sequence is TPTSPTGQQNYV. Low complexity predominate over residues 360-378; sequence NGNAQNGSTSGNGSGQAAQ. The span at 379–392 shows a compositional bias: polar residues; the sequence is PQSASNGWTQEDAA. Over residues 393–409 the composition is skewed to low complexity; it reads TTTSPSTTTSPPRHSQS. The residue at position 412 (T412) is a Phosphothreonine. S416 bears the Phosphoserine mark. Polar residues predominate over residues 417-439; the sequence is PPASVTPSANGNVHSPNANSTPA. A compositionally biased stretch (gly residues) spans 480–494; the sequence is RNGGTSGGGGGGGSG. 2 consecutive WW domains span residues 513 to 546 and 561 to 594; these read LDLP…DPRI and GPLP…DPRL. The interval 513 to 602 is interaction with MAD; that stretch reads LDLPPGYEMR…RLSGSILQMI (90 aa). Composition is skewed to low complexity over residues 608–617 and 624–656; these read PPTSAANAGT and TPAT…TNPP. A disordered region spans residues 608–661; it reads PPTSAANAGTPAPPSATPATPSAAAAVPPQATPASNATPTTLTTTTNPPHRIVP. One can recognise an HECT domain in the interval 723-1061; sequence RAKDMRKRLM…VEETCGFAVE (339 aa). Residue C1029 is the Glycyl thioester intermediate of the active site.

In terms of assembly, interacts with phosphorylated MAD.

It catalyses the reaction S-ubiquitinyl-[E2 ubiquitin-conjugating enzyme]-L-cysteine + [acceptor protein]-L-lysine = [E2 ubiquitin-conjugating enzyme]-L-cysteine + N(6)-ubiquitinyl-[acceptor protein]-L-lysine.. It participates in protein modification; protein ubiquitination. In terms of biological role, E3 ubiquitin-protein ligase which accepts ubiquitin from an E2 ubiquitin-conjugating enzyme in the form of a thioester and then directly transfers the ubiquitin to targeted substrates. Down-regulates Dpp signaling after gastrulation by promoting MAD ubiquitination and subsequent degradation. This is E3 ubiquitin-protein ligase Smurf1 from Drosophila melanogaster (Fruit fly).